The sequence spans 303 residues: Probable cell division protein WhiA (303 aa).

The segment at residues 272–303 is a DNA-binding region (H-T-H motif); it reads SIQQLADSLSTPLTKSGVNHRLRKINKIADEL.

It belongs to the WhiA family.

In terms of biological role, involved in cell division and chromosome segregation. This is Probable cell division protein WhiA from Streptococcus pneumoniae (strain ATCC 700669 / Spain 23F-1).